Here is a 584-residue protein sequence, read N- to C-terminus: uncharacterized protein (584 aa).

Disordered regions lie at residues 151–188, 222–243, 399–418, and 433–584; these read EHPP…DNDL, KRKE…SRAN, SETP…PPDF, and MQPS…AKSD. Basic and acidic residues predominate over residues 159-188; the sequence is TSSEKTRSENRERKKRWREQNEERNKDNDL. Low complexity predominate over residues 231–243; sequence LSQNQSSNASRAN. 5 stretches are compositionally biased toward polar residues: residues 399–409, 433–453, 483–500, 511–531, and 572–584; these read SETPTPVSGNG, MQPS…SSEM, NAVT…SGSP, NYSQ…SSLP, and QRSS…AKSD.

This is an uncharacterized protein from Schizosaccharomyces pombe (strain 972 / ATCC 24843) (Fission yeast).